A 105-amino-acid polypeptide reads, in one-letter code: Cortistatin (105 aa).

A signal peptide spans 1–18 (MPLSPGLLLLLLSGATAT). Positions 19-74 (AALPLEGGPTGRDSEHMQEAAGIRKSSLLTFLAWWFEWTSQASAGPLIGEEAREVA) are excised as a propeptide. An intrachain disulfide couples cysteine 93 to cysteine 104.

The protein belongs to the somatostatin family. As to expression, expressed in a subset of GABAergic cells in the cortex and hippocampus.

It is found in the secreted. Functionally, binds to all human somatostatin receptor (SSTR) subtypes. It also inhibits cAMP production induced by forskolin through SSTRs. In Homo sapiens (Human), this protein is Cortistatin (CORT).